The chain runs to 1574 residues: MSCSNNTEPTRIAILGTDNIVVDHGIWLNWVTKDLFDNVKSSTYVLVTDTNLYDTYVPPFKHAFDGATDTTAGPRLLTLAIPPGEISKSRQSKAHIEDWMLSQQCTRDTVIIALGGGVIGDMLGYVAATFMRGIRFVQVPTTLLAMVDSSIGGKTAIDTPMGKNLVGAFWQPSRIYIDLAFLETLPSREFINGMAEVIKTAAIWDENEFATLEANAPSIVAAVNQPTGPGRLSPIREILKRIVLGSARVKAEVVSSDEREGGLRNLLNFGHSIGHAYEALLTPQLLHGEAVAIGMVKEAELARYLGVLRPSAVARLAKCISSYGLPTSLGDKRVIKLTAGKRCPVDILLQKMAVDKKNDGRKKKIVLLSAIGKTHEPRATTVEDAAIKVMLSASTLITPGVSTKLATTVTPPGSKSISNRALILAALGEGTCRIKNLLHSDDVEFMLTAITRLGGASYAWEDAGEVLVLTGKGGQLRASSDPLYLGNAGTASRFLTTVVALCSPADVSSTVLTGNARMQVRPIGPLVDALRSNGVSIDYLGPGKSLPLRIDAAGGFAGGVIELAATVSSQYVSSILMAAPYAKEPVTLRLVGGKPISQPYIDMTLAMMKTFGVQVERSSSDPNTYHIAKGTYKNPAEYTIESDASSATYPLAIAAITGTTCTVPNIGSSSLQGDARFAIDVLQPMGCTVQQTASSTTVTGPAPGGLLGLPHVDMEPMTDAFLTASVLAAVAAGTTKISGIANQRVKECNRIAAMREQLGKFGIATDEFDDGIIVTGQPLDTLKTPDAGVFCYDDHRVAMSFSVLSTVANAPVTILERECTGKTWPGWWDTLSQSFGLRLNGDDKHPGVEGRHQQDHTTRSVFIVGMRGAGKTTTGRWMAKLLKRPFIDLDEELERRSGMTIPEMIHGTKGWEGFRRDELQLLHDVMENQASGHVFSCGGGIVESPEARKLLIAYKEKGGCVLLVHRDTKQVVDYLLQDKTRPAYREDIEDVYYRRKPLYDECSNFQYFSPHPAASVASRDAPLDFRCFVDAICGDGSKVTKMTAKEQSFFVSLTVPSVDSAVDVIPQVVVGSDAVELRVDLLQDQTPESVARQVSALRSAAGMPIIFTLRTVSQGGCFPDADHTQALSLYILALRMGVEFIDLEMTWPEHILQTVTNLKGRSRIIASHHDPRGELSWKNGSWTPFYNRALQWGSVIKLVGTAQSMEDNYDLARFKSDMLASHPTPVIALNMGALGKLSRVLNGFLTPVSHPALPFKAAPGQLSAAEIRRALFLLGNINAQSFHLFGKPISKSRSPALHNSLFNLTGLPHKYGLVETDQADEVAAVIREPDFGGASVTIPLKLDVMPLLDEVSESAKVIGAVNTIIPMPLDGSQKRRLLGDNTDWRGMVHCLESIGVASESTASTTTASALVIGSGGTTRAAIFALKSHGYHPIYMLARNEQSLETIRASFPTDFDLRALGGPAEVFTLAVAPTVVISTIPADKPMDPSLRETLEVVLKSPVSEQRTRVLLEMAYQPRHTAAMRLAEDAGWRTIPGAEVLAAQGWHQFQMWTGITPRFIDAQAAVNGDEIPTSTD.

The tract at residues 1 to 384 (MSCSNNTEPT…HEPRATTVED (384 aa)) is 3-dehydroquinate synthase. Residues 49–51 (DTN), 85–88 (EISK), 116–118 (GGV), and D121 each bind NAD(+). 7-phospho-2-dehydro-3-deoxy-D-arabino-heptonate is bound at residue R132. 141-142 (TT) is a binding site for NAD(+). 7-phospho-2-dehydro-3-deoxy-D-arabino-heptonate contacts are provided by D148 and K154. K163 contacts NAD(+). N164 provides a ligand contact to 7-phospho-2-dehydro-3-deoxy-D-arabino-heptonate. Residues 181–184 (FLET) and N192 each bind NAD(+). E196 is a Zn(2+) binding site. 7-phospho-2-dehydro-3-deoxy-D-arabino-heptonate is bound by residues 196-199 (EVIK) and K250. The Proton acceptor; for 3-dehydroquinate synthase activity role is filled by E260. Residues 264 to 268 (RNLLN) and H271 each bind 7-phospho-2-dehydro-3-deoxy-D-arabino-heptonate. H271 contacts Zn(2+). H275 acts as the Proton acceptor; for 3-dehydroquinate synthase activity in catalysis. Positions 287 and 356 each coordinate 7-phospho-2-dehydro-3-deoxy-D-arabino-heptonate. A Zn(2+)-binding site is contributed by H287. Residues 397-837 (ITPGVSTKLA…WDTLSQSFGL (441 aa)) form an EPSP synthase region. C819 functions as the For EPSP synthase activity in the catalytic mechanism. A shikimate kinase region spans residues 858 to 1052 (TRSVFIVGMR…TAKEQSFFVS (195 aa)). Residue 865–872 (GMRGAGKT) participates in ATP binding. Residues 1053-1266 (LTVPSVDSAV…AAPGQLSAAE (214 aa)) are 3-dehydroquinase. H1169 (proton acceptor; for 3-dehydroquinate dehydratase activity) is an active-site residue. The Schiff-base intermediate with substrate; for 3-dehydroquinate dehydratase activity role is filled by K1197. The tract at residues 1279–1574 (AQSFHLFGKP…NGDEIPTSTD (296 aa)) is shikimate dehydrogenase.

In the N-terminal section; belongs to the sugar phosphate cyclases superfamily. Dehydroquinate synthase family. The protein in the 2nd section; belongs to the EPSP synthase family. It in the 3rd section; belongs to the shikimate kinase family. This sequence in the 4th section; belongs to the type-I 3-dehydroquinase family. In the C-terminal section; belongs to the shikimate dehydrogenase family. In terms of assembly, homodimer. Zn(2+) is required as a cofactor.

The protein resides in the cytoplasm. It carries out the reaction 7-phospho-2-dehydro-3-deoxy-D-arabino-heptonate = 3-dehydroquinate + phosphate. It catalyses the reaction 3-dehydroquinate = 3-dehydroshikimate + H2O. The catalysed reaction is shikimate + NADP(+) = 3-dehydroshikimate + NADPH + H(+). The enzyme catalyses shikimate + ATP = 3-phosphoshikimate + ADP + H(+). It carries out the reaction 3-phosphoshikimate + phosphoenolpyruvate = 5-O-(1-carboxyvinyl)-3-phosphoshikimate + phosphate. The protein operates within metabolic intermediate biosynthesis; chorismate biosynthesis; chorismate from D-erythrose 4-phosphate and phosphoenolpyruvate: step 2/7. Its pathway is metabolic intermediate biosynthesis; chorismate biosynthesis; chorismate from D-erythrose 4-phosphate and phosphoenolpyruvate: step 3/7. It participates in metabolic intermediate biosynthesis; chorismate biosynthesis; chorismate from D-erythrose 4-phosphate and phosphoenolpyruvate: step 4/7. It functions in the pathway metabolic intermediate biosynthesis; chorismate biosynthesis; chorismate from D-erythrose 4-phosphate and phosphoenolpyruvate: step 5/7. The protein operates within metabolic intermediate biosynthesis; chorismate biosynthesis; chorismate from D-erythrose 4-phosphate and phosphoenolpyruvate: step 6/7. Its function is as follows. The AROM polypeptide catalyzes 5 consecutive enzymatic reactions in prechorismate polyaromatic amino acid biosynthesis. This chain is Pentafunctional AROM polypeptide, found in Verticillium alfalfae (strain VaMs.102 / ATCC MYA-4576 / FGSC 10136) (Verticillium wilt of alfalfa).